The sequence spans 321 residues: Meiotic drive suppressor wtf26 (321 aa).

Residues 29 to 68 (GLLPEYNSEEEGALPTYSDHARSSNPPNTHRENHSSGTTD) form a disordered region. Helical transmembrane passes span 73–93 (FLIK…LAVC), 110–130 (WTLF…LTYF), 151–171 (EMMI…FGCV), 188–208 (TISA…WTLW), 210–230 (ALSG…LVNG), and 243–263 (GYEI…LYEM).

The protein belongs to the WTF family. In terms of assembly, homomer. Interacts with other proteins that exhibit high sequence similarity.

The protein localises to the spore membrane. It localises to the vacuole membrane. Acts as a suppressor component of the dual wtf meiotic drive system, and can suppress but not confer meiotic drive by compatible poisons. Wtf meiotic drive systems promote unequal transmission of alleles from the parental zygote to progeny spores by encoding a poison and an antidote from the same locus; the poison is trans-acting and forms toxic aggregates in all spores within an ascus, wherease the antidote is spore-specific and targets aggregates for degradation by the vacuole. Meiotic drive by wtf systems therefore lead to poisoning of all progeny that do not inherit the dual poison/antidote allele, or express a compatible antidote. The sequence is that of Meiotic drive suppressor wtf26 from Schizosaccharomyces kambucha (Fission yeast).